The chain runs to 418 residues: Gamma-glutamyl phosphate reductase (418 aa).

Belongs to the gamma-glutamyl phosphate reductase family.

It is found in the cytoplasm. The catalysed reaction is L-glutamate 5-semialdehyde + phosphate + NADP(+) = L-glutamyl 5-phosphate + NADPH + H(+). The protein operates within amino-acid biosynthesis; L-proline biosynthesis; L-glutamate 5-semialdehyde from L-glutamate: step 2/2. Catalyzes the NADPH-dependent reduction of L-glutamate 5-phosphate into L-glutamate 5-semialdehyde and phosphate. The product spontaneously undergoes cyclization to form 1-pyrroline-5-carboxylate. The protein is Gamma-glutamyl phosphate reductase of Clostridium acetobutylicum (strain ATCC 824 / DSM 792 / JCM 1419 / IAM 19013 / LMG 5710 / NBRC 13948 / NRRL B-527 / VKM B-1787 / 2291 / W).